The primary structure comprises 111 residues: WAP four-disulfide core domain protein 12 (111 aa).

A signal peptide spans 1–23; sequence MGSSSFLVLMVSLALVTLVAAEG. The WAP domain maps to 27 to 74; it reads NIEKPGVCPADNIRCIKSDPPQCHTDQDCQGIRKCCYLHCGFKCVIPV. 4 disulfide bridges follow: C34–C62, C41–C66, C49–C61, and C55–C70. The segment at 80-111 is disordered; that stretch reads GGNKDEDVSRPCPEPGWEAKPPGVFSTRCPQK.

Its subcellular location is the secreted. Its function is as follows. Antibacterial protein. Putative acid-stable proteinase inhibitor. The protein is WAP four-disulfide core domain protein 12 (WFDC12) of Callithrix jacchus (White-tufted-ear marmoset).